The sequence spans 407 residues: Na(+)-translocating NADH-quinone reductase subunit F (407 aa).

A helical transmembrane segment spans residues 3-23; sequence ITLGIAMFTVIVLALAVLILF. Positions 32–126 constitute a 2Fe-2S ferredoxin-type domain; sequence GDITIEINDD…SMKIELPEEV (95 aa). Cys-69, Cys-75, Cys-78, and Cys-110 together coordinate [2Fe-2S] cluster. One can recognise an FAD-binding FR-type domain in the interval 129-269; it reads VKKWECTVIS…SGPFGEFFAK (141 aa).

Belongs to the NqrF family. As to quaternary structure, composed of six subunits; NqrA, NqrB, NqrC, NqrD, NqrE and NqrF. It depends on [2Fe-2S] cluster as a cofactor. FAD serves as cofactor.

It is found in the cell inner membrane. The catalysed reaction is a ubiquinone + n Na(+)(in) + NADH + H(+) = a ubiquinol + n Na(+)(out) + NAD(+). Functionally, NQR complex catalyzes the reduction of ubiquinone-1 to ubiquinol by two successive reactions, coupled with the transport of Na(+) ions from the cytoplasm to the periplasm. The first step is catalyzed by NqrF, which accepts electrons from NADH and reduces ubiquinone-1 to ubisemiquinone by a one-electron transfer pathway. This Histophilus somni (strain 129Pt) (Haemophilus somnus) protein is Na(+)-translocating NADH-quinone reductase subunit F.